Here is a 468-residue protein sequence, read N- to C-terminus: MIFGGIKSMEKIYFIGINGIGMSGLAKIMKCKGYDVKGADICTNYVTEELLSMGIVVYNEHDEENVKGADYVIASTAIKESNPELSYAKNNGIEILKRGELLAKLLNRETGIAVAGTHGKTTTSSMLSAVMLSKDPTIVVGGILPEIKSNAKPGKSEYFIAEADESDNSFLFMNPKYAVITNIDADHLDVHGNLDNIKKSFIKFICHTQKEAIICLDCENLKEVVTRLPEEKTVTTYSIKDESANIFAKNIKIEDRKTIFELYINKELIGEFSLNIPGEHNIQNSLPVIYLAFKFGVSKEEIQEALNKFKGSKRRYDVLFDKELENGYGNKTKRVRIVDDYAHHPTEIKATLKAIKSIDTSRLVAIFQPHRYSRVHFLLDEFKDAFVNVDKVILLPIYAAGEKNEFNISSEELKEHINHNNVEVMNEWKDIKRYVSRVKKDSTYIFMGAGDISTLAHEIAEELEGMSE.

116–122 lines the ATP pocket; that stretch reads GTHGKTT.

The protein belongs to the MurCDEF family.

Its subcellular location is the cytoplasm. The catalysed reaction is UDP-N-acetyl-alpha-D-muramate + L-alanine + ATP = UDP-N-acetyl-alpha-D-muramoyl-L-alanine + ADP + phosphate + H(+). The protein operates within cell wall biogenesis; peptidoglycan biosynthesis. In terms of biological role, cell wall formation. The polypeptide is UDP-N-acetylmuramate--L-alanine ligase (Fusobacterium nucleatum subsp. nucleatum (strain ATCC 25586 / DSM 15643 / BCRC 10681 / CIP 101130 / JCM 8532 / KCTC 2640 / LMG 13131 / VPI 4355)).